The following is a 318-amino-acid chain: Homeobox protein Nkx-2.5 (318 aa).

Positions Arg137–Arg196 form a DNA-binding region, homeobox.

The protein belongs to the NK-2 homeobox family. Homodimer (via the homeobox); binds DNA as homodimer. Interacts (via the homeobox) with TBX5 (via the T-box); this complex binds DNA. Interacts with HIPK1 and HIPK2, but not HIPK3. Interacts with the C-terminal zinc finger of GATA4 through its homeobox domain. Also interacts with JARID2 which represses its ability to activate transcription of ANF. Interacts with FBLIM1. Interacts with TBX18. Interacts with histone methyltransferase NSD2 (via HMG box). Interacts with NEDD9. Interacts with TBX1. In terms of tissue distribution, predominantly in the adult and embryonic heart, and to a lesser extent in lingual muscle, spleen and stomach.

It is found in the nucleus. Functionally, transcription factor required for the development of the heart and the spleen. During heart development, acts as a transcriptional activator of NPPA/ANF in cooperation with GATA4. May cooperate with TBX2 to negatively modulate expression of NPPA/ANF in the atrioventricular canal. Binds to the core DNA motif of NPPA promoter. Together with PBX1, required for spleen development through a mechanism that involves CDKN2B repression. Positively regulates transcription of genes such as COL3A1 and MMP2, resulting in increased pulmonary endothelial fibrosis in response to hypoxia. The sequence is that of Homeobox protein Nkx-2.5 (Nkx2-5) from Mus musculus (Mouse).